The chain runs to 704 residues: Polyribonucleotide nucleotidyltransferase (704 aa).

Mg(2+) is bound by residues Asp-487 and Asp-493. The KH domain maps to Pro-554–Ile-613. Positions Gly-623–Lys-691 constitute an S1 motif domain.

It belongs to the polyribonucleotide nucleotidyltransferase family. As to quaternary structure, component of the RNA degradosome, which is a multiprotein complex involved in RNA processing and mRNA degradation. Requires Mg(2+) as cofactor.

Its subcellular location is the cytoplasm. The catalysed reaction is RNA(n+1) + phosphate = RNA(n) + a ribonucleoside 5'-diphosphate. In terms of biological role, involved in mRNA degradation. Catalyzes the phosphorolysis of single-stranded polyribonucleotides processively in the 3'- to 5'-direction. This Xanthomonas euvesicatoria pv. vesicatoria (strain 85-10) (Xanthomonas campestris pv. vesicatoria) protein is Polyribonucleotide nucleotidyltransferase.